Here is a 382-residue protein sequence, read N- to C-terminus: Pyrimidine monooxygenase RutA (382 aa).

FMN is bound by residues 68–69, Asn134, Glu143, 159–160, and Ser209; these read IK and RY.

This sequence belongs to the NtaA/SnaA/DszA monooxygenase family. RutA subfamily.

It catalyses the reaction uracil + FMNH2 + NADH + O2 = (Z)-3-ureidoacrylate + FMN + NAD(+) + H2O + H(+). The catalysed reaction is thymine + FMNH2 + NADH + O2 = (Z)-2-methylureidoacrylate + FMN + NAD(+) + H2O + H(+). Its function is as follows. Catalyzes the pyrimidine ring opening between N-3 and C-4 by an unusual flavin hydroperoxide-catalyzed mechanism, adding oxygen atoms in the process to yield ureidoacrylate peracid, that immediately reacts with FMN forming ureidoacrylate and FMN-N(5)-oxide. The FMN-N(5)-oxide reacts spontaneously with NADH to produce FMN. Requires the flavin reductase RutF to regenerate FMN in vivo. In Escherichia coli O157:H7, this protein is Pyrimidine monooxygenase RutA (rutA).